The primary structure comprises 658 residues: MPRIAALPDHLVNQIAAGEVVERPANALKEIVENSIDAGATAIDVELDGGGIRLIRVSDNGSGIHPDDIELALHRHATSKIKTLNDLEHVASMGFRGEGLASIASVSRLTLTSRQEDSSHATQVKAEDGKLSSPTAAAHPVGTTIEAAELFFNTPARRKFLKSENTEYAHCATMLERLALAHPHIAFSLKRDGKPVFKLPAQSLHERIAAIVGDDFQTASLEIDSGNGALRLYGAIAKPTFAKGKTDKQYCFVNHRFVRDKVMLHAVKQAYRDVLHNALTPAFVLFLDLPPEAVDVNVHPTKTEIRFRDSRQVHQLVFHTLNKALADTRADLTESVSNAGEVLHDITGVTPAPMPSENDSENLFDSASDYPTGNKPDTRNAFGSSGKTAPMPYQAARAPQQHSLSLRESRAAMNTYAELYKKTDDIDLELSRLEQARFGNMPSETPIPKTDTPLSDGIPSQSELPPLGFAIAQLLGIYILAQAEDSLLLIDMHAAAERVNYEKMKRQRQENGKLQSQRLLIPVTFAASHEECAALADYAETLAGFGLELSDMGGNTLAVRAVPAMLGKADVVSLAKDVLGELAQVGSSQTIEEHENHILATMSCHGSVRAGRQLTLPEMNALLRDMENTPRSNQCNHGRPTWVKLTLKELDALFLRGQ.

A compositionally biased stretch (basic and acidic residues) spans 114–130 (RQEDSSHATQVKAEDGK). Disordered stretches follow at residues 114 to 137 (RQEDSSHATQVKAEDGKLSSPTAA) and 369 to 391 (DYPTGNKPDTRNAFGSSGKTAPM).

Belongs to the DNA mismatch repair MutL/HexB family.

Functionally, this protein is involved in the repair of mismatches in DNA. It is required for dam-dependent methyl-directed DNA mismatch repair. May act as a 'molecular matchmaker', a protein that promotes the formation of a stable complex between two or more DNA-binding proteins in an ATP-dependent manner without itself being part of a final effector complex. In Neisseria meningitidis serogroup C (strain 053442), this protein is DNA mismatch repair protein MutL.